We begin with the raw amino-acid sequence, 325 residues long: GMP reductase (325 aa).

Residue cysteine 173 is the Thioimidate intermediate of the active site. NADP(+) is bound at residue 202–225 (IIADGGIRSHGDIAKSVRFGATMV).

This sequence belongs to the IMPDH/GMPR family. GuaC type 2 subfamily.

The enzyme catalyses IMP + NH4(+) + NADP(+) = GMP + NADPH + 2 H(+). In terms of biological role, catalyzes the irreversible NADPH-dependent deamination of GMP to IMP. It functions in the conversion of nucleobase, nucleoside and nucleotide derivatives of G to A nucleotides, and in maintaining the intracellular balance of A and G nucleotides. The polypeptide is GMP reductase (Acidovorax ebreus (strain TPSY) (Diaphorobacter sp. (strain TPSY))).